We begin with the raw amino-acid sequence, 504 residues long: 2,3-bisphosphoglycerate-independent phosphoglycerate mutase (504 aa).

Residues aspartate 9 and serine 59 each coordinate Mn(2+). The active-site Phosphoserine intermediate is the serine 59. Substrate-binding positions include histidine 120, 149-150 (RD), arginine 181, arginine 187, 253-256 (RPDR), and lysine 326. Mn(2+) is bound by residues aspartate 393, histidine 397, aspartate 434, histidine 435, and histidine 451.

The protein belongs to the BPG-independent phosphoglycerate mutase family. Mn(2+) serves as cofactor.

It carries out the reaction (2R)-2-phosphoglycerate = (2R)-3-phosphoglycerate. Its pathway is carbohydrate degradation; glycolysis; pyruvate from D-glyceraldehyde 3-phosphate: step 3/5. In terms of biological role, catalyzes the interconversion of 2-phosphoglycerate and 3-phosphoglycerate. This Haloquadratum walsbyi (strain DSM 16790 / HBSQ001) protein is 2,3-bisphosphoglycerate-independent phosphoglycerate mutase.